The primary structure comprises 1034 residues: Ubiquitin-like-specific protease 2 (1034 aa).

Disordered regions lie at residues 1–42, 71–110, 388–419, 731–800, 841–960, and 983–1034; these read MSAR…FRKD, IELSDNDVDNNDEGEGVNSGCSDQDFEPLQSSPLKRHSSL, SHAVSQLRRSNRFKDVSDPANSNSNSEFDDAT, IDQS…PIRH, GVSS…DSLG, and SSPT…DEDP. Residues 19 to 33 are compositionally biased toward low complexity; the sequence is SSRASSPRSSASLPP. Residues 74–85 show a composition bias toward acidic residues; the sequence is SDNDVDNNDEGE. The segment covering 743–756 has biased composition (low complexity); the sequence is TSEPPCSRSSSIST. Phosphoserine is present on serine 788. Polar residues-rich tracts occupy residues 845-856, 876-904, and 912-923; these read PIKNDQALSSTH, QLSSHVQSLSTDSMERQSSPNNTNIVISD, and GVNSESKNTSGI. Serine 903 carries the post-translational modification Phosphoserine. Residues serine 983 and serine 984 each carry the phosphoserine modification. A compositionally biased stretch (polar residues) spans 992-1017; the sequence is TSATSKGSNAQLLSNYGDENNQSQDS.

This sequence belongs to the peptidase C48 family.

Insertion mutation in SMT4 confers temperature and benomyl sensitivity; high copy suppressor of a temperature sensitive mutation in MIF2. The polypeptide is Ubiquitin-like-specific protease 2 (ULP2) (Saccharomyces cerevisiae (strain ATCC 204508 / S288c) (Baker's yeast)).